A 309-amino-acid polypeptide reads, in one-letter code: Protein lifeguard 3 (309 aa).

Disordered stretches follow at residues 1–31 and 64–84; these read MSNP…QPSV and PMNY…SFRP. Basic and acidic residues predominate over residues 70–84; it reads DYNEEERAGSDSFRP. A phosphoserine mark is found at Ser-79 and Ser-81. 7 helical membrane-spanning segments follow: residues 101-121, 132-152, 163-183, 188-208, 221-241, 244-264, and 286-306; these read YCII…FTFV, VAVY…LACC, IILL…ISSM, AVII…IFCF, FCVL…VLIF, IYWL…LFLA, and GALQ…QLVG.

Belongs to the BI1 family. LFG subfamily. As to expression, expressed in most tissues except spleen, thymus and testis.

It localises to the membrane. The protein resides in the lysosome membrane. The protein localises to the endosome membrane. Its function is as follows. Negatively regulates aortic matrix metalloproteinase-9 (MMP9) production and may play a protective role in vascular remodeling. The chain is Protein lifeguard 3 (Tmbim1) from Mus musculus (Mouse).